Reading from the N-terminus, the 294-residue chain is Glutamyl-Q tRNA(Asp) synthetase (294 aa).

Residues R7–S11 and E43 each bind L-glutamate. Residues P10–S20 carry the 'HIGH' region motif. Zn(2+) is bound by residues C99, C101, Y113, and C117. L-glutamate-binding residues include Y168 and R186. A 'KMSKS' region motif is present at residues K224–Q228. K227 is a binding site for ATP.

Belongs to the class-I aminoacyl-tRNA synthetase family. GluQ subfamily. Requires Zn(2+) as cofactor.

Catalyzes the tRNA-independent activation of glutamate in presence of ATP and the subsequent transfer of glutamate onto a tRNA(Asp). Glutamate is transferred on the 2-amino-5-(4,5-dihydroxy-2-cyclopenten-1-yl) moiety of the queuosine in the wobble position of the QUC anticodon. This is Glutamyl-Q tRNA(Asp) synthetase from Vibrio parahaemolyticus serotype O3:K6 (strain RIMD 2210633).